We begin with the raw amino-acid sequence, 221 residues long: Probable glutathione S-transferase (221 aa).

A GST N-terminal domain is found at 4-83 (EEVILLDFWP…YIEEVWKDKA (80 aa)). Glutathione-binding positions include serine 14, lysine 41, isoleucine 55, and 67–68 (ES). Positions 90–214 (DPYDRAQARF…PKVLEFVKVL (125 aa)) constitute a GST C-terminal domain.

This sequence belongs to the GST superfamily. HSP26 family. Root tip-specific expression.

The enzyme catalyses RX + glutathione = an S-substituted glutathione + a halide anion + H(+). This is Probable glutathione S-transferase from Nicotiana tabacum (Common tobacco).